Here is a 449-residue protein sequence, read N- to C-terminus: Exodeoxyribonuclease 7 large subunit (449 aa).

The protein belongs to the XseA family. As to quaternary structure, heterooligomer composed of large and small subunits.

The protein resides in the cytoplasm. It carries out the reaction Exonucleolytic cleavage in either 5'- to 3'- or 3'- to 5'-direction to yield nucleoside 5'-phosphates.. In terms of biological role, bidirectionally degrades single-stranded DNA into large acid-insoluble oligonucleotides, which are then degraded further into small acid-soluble oligonucleotides. This is Exodeoxyribonuclease 7 large subunit from Salmonella paratyphi B (strain ATCC BAA-1250 / SPB7).